A 348-amino-acid chain; its full sequence is Phosphoribosylformylglycinamidine cyclo-ligase (348 aa).

It belongs to the AIR synthase family.

The protein localises to the cytoplasm. It carries out the reaction 2-formamido-N(1)-(5-O-phospho-beta-D-ribosyl)acetamidine + ATP = 5-amino-1-(5-phospho-beta-D-ribosyl)imidazole + ADP + phosphate + H(+). It participates in purine metabolism; IMP biosynthesis via de novo pathway; 5-amino-1-(5-phospho-D-ribosyl)imidazole from N(2)-formyl-N(1)-(5-phospho-D-ribosyl)glycinamide: step 2/2. The protein is Phosphoribosylformylglycinamidine cyclo-ligase of Citrifermentans bemidjiense (strain ATCC BAA-1014 / DSM 16622 / JCM 12645 / Bem) (Geobacter bemidjiensis).